Reading from the N-terminus, the 344-residue chain is Glyceraldehyde-3-phosphate dehydrogenase (344 aa).

Residues 11–12 (TI) and G110 each bind NAD(+). 139–141 (SCN) contributes to the D-glyceraldehyde 3-phosphate binding site. C140 acts as the Nucleophile in catalysis. R169 contributes to the NAD(+) binding site. 195 to 196 (HG) is a D-glyceraldehyde 3-phosphate binding site. Q302 serves as a coordination point for NAD(+).

The protein belongs to the glyceraldehyde-3-phosphate dehydrogenase family. In terms of assembly, homotetramer.

The protein resides in the cytoplasm. It carries out the reaction D-glyceraldehyde 3-phosphate + phosphate + NADP(+) = (2R)-3-phospho-glyceroyl phosphate + NADPH + H(+). It catalyses the reaction D-glyceraldehyde 3-phosphate + phosphate + NAD(+) = (2R)-3-phospho-glyceroyl phosphate + NADH + H(+). It participates in carbohydrate degradation; glycolysis; pyruvate from D-glyceraldehyde 3-phosphate: step 1/5. The protein is Glyceraldehyde-3-phosphate dehydrogenase of Pyrobaculum neutrophilum (strain DSM 2338 / JCM 9278 / NBRC 100436 / V24Sta) (Thermoproteus neutrophilus).